Consider the following 352-residue polypeptide: N-acetyl-gamma-glutamyl-phosphate reductase (352 aa).

Belongs to the NAGSA dehydrogenase family. Type 1 subfamily.

It localises to the cytoplasm. The enzyme catalyses N-acetyl-L-glutamate 5-semialdehyde + phosphate + NADP(+) = N-acetyl-L-glutamyl 5-phosphate + NADPH + H(+). The protein operates within amino-acid biosynthesis; L-arginine biosynthesis; N(2)-acetyl-L-ornithine from L-glutamate: step 3/4. Its function is as follows. Catalyzes the NADPH-dependent reduction of N-acetyl-5-glutamyl phosphate to yield N-acetyl-L-glutamate 5-semialdehyde. The sequence is that of N-acetyl-gamma-glutamyl-phosphate reductase from Nostoc ellipsosporum.